The following is a 128-amino-acid chain: Cytochrome c-type biogenesis protein CcmE (128 aa).

The Cytoplasmic portion of the chain corresponds to 1 to 7 (MKKKHKR). A helical; Signal-anchor for type II membrane protein transmembrane segment spans residues 8–28 (LLVASGIFFFLNCIVFFILTI). Over 29 to 128 (LRENISFFYT…KHDENYMPRK (100 aa)) the chain is Extracellular. Heme is bound by residues histidine 120 and tyrosine 124.

It belongs to the CcmE/CycJ family.

It is found in the cell membrane. Functionally, heme chaperone required for the biogenesis of c-type cytochromes. Transiently binds heme delivered by CcmC and transfers the heme to apo-cytochromes in a process facilitated by CcmF and CcmH. The protein is Cytochrome c-type biogenesis protein CcmE of Wolbachia sp. subsp. Brugia malayi (strain TRS).